Here is a 179-residue protein sequence, read N- to C-terminus: Large ribosomal subunit protein uL6 (179 aa).

It belongs to the universal ribosomal protein uL6 family. As to quaternary structure, part of the 50S ribosomal subunit.

Its function is as follows. This protein binds to the 23S rRNA, and is important in its secondary structure. It is located near the subunit interface in the base of the L7/L12 stalk, and near the tRNA binding site of the peptidyltransferase center. The polypeptide is Large ribosomal subunit protein uL6 (Fructilactobacillus sanfranciscensis (Lactobacillus sanfranciscensis)).